The sequence spans 660 residues: MPSKTSSRFANINPNVFVSTIMIIAIFLAIVILAPDAFELLTQQLKNWITESFSWFYVLSVAFFLIVLGYIACSSSGKIKLGPDHSQPDYSNSSWFAMLFTAGMGIGLMFFGIAEPIMHYVSPPSGEPETILAAQQSMRVTFFHWGLHAWGIYAIVALSLSYFAYRHDLPLKIRSSLYPLIGKKIYGPMGDAVDTFATIGTIFGVATTLGFGVTQISSGLNYLFGFEPTSFSKVVLIIIVSAMAALSVGLGLDKGVKRLAELNLVLAVTLLAFVFFTSATVYLLQTTIQNTGQYISNLFEMTFNLYAYQPNGWIGGWTIMYWAWWISWSPFVGMFIARVSRGRTIREFIIGVMLIPTGFTLIWMGFMGNAGLYSILHDGNLSLLNAVQRDSSVALFEFLHSLPFSGVMSLLATVLVVLFFVTSADSGALVVDYLTAKSEDSPVWQRLFWIVVMAGLAIILLLAGGLTALQSATIMSALPFTFIMLLICWGLIKALRIDSTKMQAIQEARTTPRAIQNPRSWQQRLGLIMHYPHSKVEVDAYIKKHVQRAFESLEREFKRRHLTVAISETDDGLQLKVDHHDEINFIYHVVSRETMPPSFMLEQEHNADVEKYFQAEVFLREGGQNYDVMDWTEEDLIQDIIDQYERHLYFLSVMRAQTGN.

Residues 1–13 lie on the Cytoplasmic side of the membrane; the sequence is MPSKTSSRFANIN. A helical transmembrane segment spans residues 14-34; the sequence is PNVFVSTIMIIAIFLAIVILA. Residues 35–52 are Periplasmic-facing; sequence PDAFELLTQQLKNWITES. The chain crosses the membrane as a helical span at residues 53–73; that stretch reads FSWFYVLSVAFFLIVLGYIAC. At 74-93 the chain is on the cytoplasmic side; that stretch reads SSSGKIKLGPDHSQPDYSNS. Residues 94-114 form a helical membrane-spanning segment; that stretch reads SWFAMLFTAGMGIGLMFFGIA. At 115–139 the chain is on the periplasmic side; it reads EPIMHYVSPPSGEPETILAAQQSMR. Residues 140–160 traverse the membrane as a helical segment; the sequence is VTFFHWGLHAWGIYAIVALSL. At 161–195 the chain is on the cytoplasmic side; sequence SYFAYRHDLPLKIRSSLYPLIGKKIYGPMGDAVDT. The chain crosses the membrane as a helical span at residues 196–216; sequence FATIGTIFGVATTLGFGVTQI. Over 217–230 the chain is Periplasmic; the sequence is SSGLNYLFGFEPTS. A helical transmembrane segment spans residues 231–251; it reads FSKVVLIIIVSAMAALSVGLG. Topologically, residues 252–263 are cytoplasmic; sequence LDKGVKRLAELN. A helical transmembrane segment spans residues 264–284; that stretch reads LVLAVTLLAFVFFTSATVYLL. The Periplasmic segment spans residues 285 to 316; that stretch reads QTTIQNTGQYISNLFEMTFNLYAYQPNGWIGG. A helical transmembrane segment spans residues 317-337; that stretch reads WTIMYWAWWISWSPFVGMFIA. Over 338–347 the chain is Cytoplasmic; the sequence is RVSRGRTIRE. A helical membrane pass occupies residues 348–368; sequence FIIGVMLIPTGFTLIWMGFMG. The Periplasmic segment spans residues 369-401; it reads NAGLYSILHDGNLSLLNAVQRDSSVALFEFLHS. Residues 402–422 form a helical membrane-spanning segment; it reads LPFSGVMSLLATVLVVLFFVT. Residues 423-446 lie on the Cytoplasmic side of the membrane; it reads SADSGALVVDYLTAKSEDSPVWQR. A helical transmembrane segment spans residues 447–467; that stretch reads LFWIVVMAGLAIILLLAGGLT. The Periplasmic segment spans residues 468–471; the sequence is ALQS. Residues 472 to 492 form a helical membrane-spanning segment; it reads ATIMSALPFTFIMLLICWGLI. The Cytoplasmic segment spans residues 493–660; sequence KALRIDSTKM…LSVMRAQTGN (168 aa).

The protein belongs to the BCCT transporter (TC 2.A.15) family.

The protein resides in the cell inner membrane. With respect to regulation, uptake is activated by NaCl, KCl or mannose gradients across the cell membrane. Inhibited by the protonophore 3,3',4',5-tetrachlorosalicylanilide (TCS). Functionally, energy-dependent uptake of glycine betaine in response to high salinity. The protein is Glycine betaine transporter of Acinetobacter baylyi (strain ATCC 33305 / BD413 / ADP1).